A 467-amino-acid chain; its full sequence is Protein indeterminate-domain 6, chloroplastic (467 aa).

The transit peptide at M1–S20 directs the protein to the chloroplast. Residues T38 to D65 are disordered. Residues M39 to V48 are compositionally biased toward polar residues. Position 72 is a phosphoserine (S72). 2 consecutive C2H2-type zinc fingers follow at residues F82–H104 and Y123–H153. A C2H2-type 2; degenerate zinc finger spans residues W158 to G181. Zn(2+) contacts are provided by C160, C163, H176, C180, C187, C189, H202, and C206. The CCHC-type 2; atypical zinc-finger motif lies at Y185–A208. Residues R195–D207 form an SHR-binding region. Positions N440–A467 are disordered.

Its subcellular location is the plastid. The protein resides in the chloroplast. Its function is as follows. Probable transcription factor. In Arabidopsis thaliana (Mouse-ear cress), this protein is Protein indeterminate-domain 6, chloroplastic.